A 130-amino-acid polypeptide reads, in one-letter code: Large ribosomal subunit protein bL21 (130 aa).

The interval 110-130 (TAPTATEETADATPDTETAAE) is disordered.

It belongs to the bacterial ribosomal protein bL21 family. Part of the 50S ribosomal subunit. Contacts protein L20.

Functionally, this protein binds to 23S rRNA in the presence of protein L20. The protein is Large ribosomal subunit protein bL21 of Nostoc sp. (strain PCC 7120 / SAG 25.82 / UTEX 2576).